The chain runs to 154 residues: Large ribosomal subunit protein uL22c (154 aa).

This sequence belongs to the universal ribosomal protein uL22 family. As to quaternary structure, part of the 50S ribosomal subunit.

It localises to the plastid. Its subcellular location is the chloroplast. Its function is as follows. This protein binds specifically to 23S rRNA. In terms of biological role, the globular domain of the protein is located near the polypeptide exit tunnel on the outside of the subunit, while an extended beta-hairpin is found that lines the wall of the exit tunnel in the center of the 70S ribosome. The chain is Large ribosomal subunit protein uL22c (rpl22) from Platanus occidentalis (Sycamore).